A 122-amino-acid polypeptide reads, in one-letter code: Large ribosomal subunit protein uL14 (122 aa).

This sequence belongs to the universal ribosomal protein uL14 family. As to quaternary structure, part of the 50S ribosomal subunit. Forms a cluster with proteins L3 and L19. In the 70S ribosome, L14 and L19 interact and together make contacts with the 16S rRNA in bridges B5 and B8.

Functionally, binds to 23S rRNA. Forms part of two intersubunit bridges in the 70S ribosome. The sequence is that of Large ribosomal subunit protein uL14 from Sorangium cellulosum (strain So ce56) (Polyangium cellulosum (strain So ce56)).